We begin with the raw amino-acid sequence, 308 residues long: Nuclear transcription factor Y subunit A-5 (308 aa).

Over residues 1-10 the composition is skewed to basic and acidic residues; the sequence is MQVFQRKEDS. 2 disordered regions span residues 1–26 and 49–71; these read MQVFQRKEDSSWGNSMPTTNSNIQGS and GLQLQNQDSTSSQSTEEESGGGE. Over residues 11–26 the composition is skewed to polar residues; sequence SWGNSMPTTNSNIQGS. Residues 181–204 carry the Subunit association domain (SAD) motif; sequence FVNAKQYHAILRRRKHRAKLEAQN. A DNA-binding region (NFYA/HAP2-type) is located at residues 211–236; sequence KPYLHESRHLHALKRARGSGGRFLNT. The segment at 251-273 is disordered; it reads MANGQNFSMSPHGGGSGIGSSSI.

It belongs to the NFYA/HAP2 subunit family. In terms of assembly, heterotrimeric transcription factor composed of three components, NF-YA, NF-YB and NF-YC. NF-YB and NF-YC must interact and dimerize for NF-YA association and DNA binding. Expressed in the whole plant, except roots. Present in etiolated seedlings.

The protein localises to the nucleus. In terms of biological role, stimulates the transcription of various genes by recognizing and binding to a CCAAT motif in promoters. Involved in the blue light (BL) and abscisic acid (ABA) signaling pathways. This Arabidopsis thaliana (Mouse-ear cress) protein is Nuclear transcription factor Y subunit A-5 (NFYA5).